Consider the following 376-residue polypeptide: Queuine tRNA-ribosyltransferase (376 aa).

The active-site Proton acceptor is the aspartate 89. Residues 89–93, aspartate 143, glutamine 194, and glycine 221 contribute to the substrate site; that span reads DSGGF. Residues 252-258 are RNA binding; the sequence is GVGTPAN. The Nucleophile role is filled by aspartate 271. Cysteine 309, cysteine 311, cysteine 314, and histidine 340 together coordinate Zn(2+).

This sequence belongs to the queuine tRNA-ribosyltransferase family. In terms of assembly, homodimer. Within each dimer, one monomer is responsible for RNA recognition and catalysis, while the other monomer binds to the replacement base PreQ1. Requires Zn(2+) as cofactor.

It catalyses the reaction 7-aminomethyl-7-carbaguanine + guanosine(34) in tRNA = 7-aminomethyl-7-carbaguanosine(34) in tRNA + guanine. It functions in the pathway tRNA modification; tRNA-queuosine biosynthesis. Its function is as follows. Catalyzes the base-exchange of a guanine (G) residue with the queuine precursor 7-aminomethyl-7-deazaguanine (PreQ1) at position 34 (anticodon wobble position) in tRNAs with GU(N) anticodons (tRNA-Asp, -Asn, -His and -Tyr). Catalysis occurs through a double-displacement mechanism. The nucleophile active site attacks the C1' of nucleotide 34 to detach the guanine base from the RNA, forming a covalent enzyme-RNA intermediate. The proton acceptor active site deprotonates the incoming PreQ1, allowing a nucleophilic attack on the C1' of the ribose to form the product. After dissociation, two additional enzymatic reactions on the tRNA convert PreQ1 to queuine (Q), resulting in the hypermodified nucleoside queuosine (7-(((4,5-cis-dihydroxy-2-cyclopenten-1-yl)amino)methyl)-7-deazaguanosine). The chain is Queuine tRNA-ribosyltransferase from Clostridium kluyveri (strain NBRC 12016).